Here is a 250-residue protein sequence, read N- to C-terminus: HTH-type transcriptional regulator KipR (250 aa).

The 61-residue stretch at 5–65 (NKTVVKSMAL…DASGAYSLGL (61 aa)) folds into the HTH iclR-type domain. Residues 26 to 45 (LSELVSLTGMPKTSVHRMVS) constitute a DNA-binding region (H-T-H motif). Positions 80–249 (IRKIAKPVME…ALQISRKIGY (170 aa)) constitute an IclR-ED domain.

Functionally, transcriptional repressor of the kip gene-containing operon. The chain is HTH-type transcriptional regulator KipR (kipR) from Bacillus subtilis (strain 168).